Consider the following 649-residue polypeptide: V-type ATP synthase subunit I (649 aa).

7 consecutive transmembrane segments (helical) span residues 312–332, 360–380, 455–475, 485–505, 520–540, 556–576, and 593–613; these read FLSF…GLIF, FMIL…FFGV, DNIL…LGML, IGWV…LQAV, GQVG…GGII, VFSD…GAMV, and VLII…GGVI.

The protein belongs to the V-ATPase 116 kDa subunit family.

It is found in the cell membrane. Produces ATP from ADP in the presence of a proton gradient across the membrane. This is V-type ATP synthase subunit I (atpI) from Chlamydia muridarum (strain MoPn / Nigg).